A 200-amino-acid polypeptide reads, in one-letter code: uncharacterized protein (200 aa).

An AMMECR1 domain is found at 1–191; the sequence is MTSANIQMAV…LDYKDYVNYK (191 aa).

This is an uncharacterized protein from Caenorhabditis elegans.